An 827-amino-acid polypeptide reads, in one-letter code: Discs large homolog 1-like protein (827 aa).

2 disordered regions span residues 38–61 (HQDE…TPGP) and 102–133 (SPVV…ANPP). Positions 44–56 (GSPQEPSSPQFTD) are enriched in polar residues. 3 PDZ domains span residues 159–246 (EITL…RRRK), 254–341 (EIKL…AKPN), and 403–484 (KVVL…QYRP). The 71-residue stretch at 518 to 588 (KRSLYVRALF…PSKRRVEKKE (71 aa)) folds into the SH3 domain. The segment at 595–618 (VKFNSKSREKGDNPDDMLSKGQSG) is disordered. Residues 637-812 (SRPVIILGPM…IYDQVKQIIE (176 aa)) form the Guanylate kinase-like domain.

Belongs to the MAGUK family.

It localises to the membrane. Its function is as follows. May play a role in synapse assembly and function. The sequence is that of Discs large homolog 1-like protein (dlg1l) from Danio rerio (Zebrafish).